Consider the following 714-residue polypeptide: Zinc finger matrin-type protein 1 (714 aa).

Residues 89-119 form a Matrin-type 1 zinc finger; sequence NFCKPCGVVLQHESERISHFESEIHAQNVKF. A disordered region spans residues 172 to 214; the sequence is HYVGKSHSPTQNQSLEEHDQVSPSTCSPKMDEPNTTPAPPPFL. A Matrin-type 2 zinc finger spans residues 230–254; that stretch reads YVCHICSITFTSLHMFRSHMQGTEH. Positions 417–434 are enriched in basic and acidic residues; it reads RERVDSEHRQRPCEERFS. Disordered stretches follow at residues 417–469 and 571–714; these read RERV…NDDF and MPAS…ILGF. Polar residues-rich tracts occupy residues 437-446 and 575-588; these read APQTYQQEYS and LSLS…SSYN. Residues 609–619 show a composition bias toward basic residues; that stretch reads SHRRRRQKRKR. Basic and acidic residues-rich tracts occupy residues 620–632 and 640–662; these read HLEE…EKEQ and SYQD…EDKA. Residues 669-678 show a composition bias toward basic residues; the sequence is TKHRRKKRKH.

It localises to the nucleus. This chain is Zinc finger matrin-type protein 1 (Zmat1), found in Mus musculus (Mouse).